Consider the following 756-residue polypeptide: Catalase-peroxidase (756 aa).

The signal sequence occupies residues 1 to 26 (MKGKTVNKQTLAALVSALLVFNPAVA). A cross-link (tryptophyl-tyrosyl-methioninium (Trp-Tyr) (with M-274)) is located at residues 126–248 (WHSAGTYRTL…LGATHMGLIY (123 aa)). The active-site Proton acceptor is the His-127. Residues 248–274 (YVNPEGPKGVPDPLGSAKNIRTAFSRM) constitute a cross-link (tryptophyl-tyrosyl-methioninium (Tyr-Met) (with W-126)). His-289 contacts heme b.

This sequence belongs to the peroxidase family. Peroxidase/catalase subfamily. In terms of assembly, homodimer or homotetramer. It depends on heme b as a cofactor. Formation of the three residue Trp-Tyr-Met cross-link is important for the catalase, but not the peroxidase activity of the enzyme.

The enzyme catalyses H2O2 + AH2 = A + 2 H2O. The catalysed reaction is 2 H2O2 = O2 + 2 H2O. In terms of biological role, bifunctional enzyme with both catalase and broad-spectrum peroxidase activity. This chain is Catalase-peroxidase, found in Shewanella loihica (strain ATCC BAA-1088 / PV-4).